A 215-amino-acid chain; its full sequence is V-type ATP synthase subunit D (215 aa).

It belongs to the V-ATPase D subunit family.

Its function is as follows. Produces ATP from ADP in the presence of a proton gradient across the membrane. The protein is V-type ATP synthase subunit D of Anaeromyxobacter sp. (strain Fw109-5).